Reading from the N-terminus, the 211-residue chain is Protein-L-isoaspartate O-methyltransferase (211 aa).

The active site involves serine 60.

It belongs to the methyltransferase superfamily. L-isoaspartyl/D-aspartyl protein methyltransferase family.

The protein localises to the cytoplasm. It catalyses the reaction [protein]-L-isoaspartate + S-adenosyl-L-methionine = [protein]-L-isoaspartate alpha-methyl ester + S-adenosyl-L-homocysteine. Functionally, catalyzes the methyl esterification of L-isoaspartyl residues in peptides and proteins that result from spontaneous decomposition of normal L-aspartyl and L-asparaginyl residues. It plays a role in the repair and/or degradation of damaged proteins. This chain is Protein-L-isoaspartate O-methyltransferase, found in Pseudomonas savastanoi pv. phaseolicola (strain 1448A / Race 6) (Pseudomonas syringae pv. phaseolicola (strain 1448A / Race 6)).